Reading from the N-terminus, the 261-residue chain is Cytochrome c oxidase subunit 3 (261 aa).

At 1 to 15 the chain is on the mitochondrial matrix side; it reads MSHQAHAYHMVDPSP. A helical transmembrane segment spans residues 16 to 34; it reads WPLTGAGAALLMTSGLAMW. Residues 35–40 are Mitochondrial intermembrane-facing; that stretch reads FHKNSC. Residues 41-66 traverse the membrane as a helical segment; it reads ILMTLGLILMLLTMYQWWRDIVREGT. The Mitochondrial matrix segment spans residues 67 to 72; that stretch reads FLGHHT. The chain crosses the membrane as a helical span at residues 73–105; the sequence is SPVQQGLRYGMILFIISEVCFFAGFFWAFYHAS. Residues 106 to 128 are Mitochondrial intermembrane-facing; it reads LAPTPELGLTWPPTGINPLNPFE. The chain crosses the membrane as a helical span at residues 129-152; it reads VPLLNTAVLLASGVSVTWAHHSIT. Residues 153–155 are Mitochondrial matrix-facing; that stretch reads EKN. A helical membrane pass occupies residues 156–183; that stretch reads RTETTQALTLTVLLGLYFTALQIMEYYE. The Mitochondrial intermembrane portion of the chain corresponds to 184 to 190; sequence TPFTMAD. A helical membrane pass occupies residues 191 to 223; sequence GVYGSTFFVATGFHGLHVIIGSLFLLTCLLRHL. The Mitochondrial matrix segment spans residues 224-232; that stretch reads QYHFTSKHH. The chain crosses the membrane as a helical span at residues 233–256; it reads FGFEAAAWYWHFVDVVWLFLYISI. Over 257–261 the chain is Mitochondrial intermembrane; sequence YWWGS.

It belongs to the cytochrome c oxidase subunit 3 family. As to quaternary structure, component of the cytochrome c oxidase (complex IV, CIV), a multisubunit enzyme composed of 14 subunits. The complex is composed of a catalytic core of 3 subunits MT-CO1, MT-CO2 and MT-CO3, encoded in the mitochondrial DNA, and 11 supernumerary subunits COX4I, COX5A, COX5B, COX6A, COX6B, COX6C, COX7A, COX7B, COX7C, COX8 and NDUFA4, which are encoded in the nuclear genome. The complex exists as a monomer or a dimer and forms supercomplexes (SCs) in the inner mitochondrial membrane with NADH-ubiquinone oxidoreductase (complex I, CI) and ubiquinol-cytochrome c oxidoreductase (cytochrome b-c1 complex, complex III, CIII), resulting in different assemblies (supercomplex SCI(1)III(2)IV(1) and megacomplex MCI(2)III(2)IV(2)).

It is found in the mitochondrion inner membrane. It carries out the reaction 4 Fe(II)-[cytochrome c] + O2 + 8 H(+)(in) = 4 Fe(III)-[cytochrome c] + 2 H2O + 4 H(+)(out). In terms of biological role, component of the cytochrome c oxidase, the last enzyme in the mitochondrial electron transport chain which drives oxidative phosphorylation. The respiratory chain contains 3 multisubunit complexes succinate dehydrogenase (complex II, CII), ubiquinol-cytochrome c oxidoreductase (cytochrome b-c1 complex, complex III, CIII) and cytochrome c oxidase (complex IV, CIV), that cooperate to transfer electrons derived from NADH and succinate to molecular oxygen, creating an electrochemical gradient over the inner membrane that drives transmembrane transport and the ATP synthase. Cytochrome c oxidase is the component of the respiratory chain that catalyzes the reduction of oxygen to water. Electrons originating from reduced cytochrome c in the intermembrane space (IMS) are transferred via the dinuclear copper A center (CU(A)) of subunit 2 and heme A of subunit 1 to the active site in subunit 1, a binuclear center (BNC) formed by heme A3 and copper B (CU(B)). The BNC reduces molecular oxygen to 2 water molecules using 4 electrons from cytochrome c in the IMS and 4 protons from the mitochondrial matrix. The protein is Cytochrome c oxidase subunit 3 (MT-CO3) of Petromyzon marinus (Sea lamprey).